The following is a 474-amino-acid chain: uncharacterized protein (474 aa).

10 consecutive transmembrane segments (helical) span residues 17–39 (ILGG…SVYY), 44–61 (FLNF…GFVL), 81–103 (LAWL…YFSY), 144–166 (GVGI…YLLY), 186–208 (IIWI…GLSF), 239–256 (IVMI…FSIH), 268–286 (IQTK…IISI), 319–341 (LSLF…TGGV), 385–407 (AFVV…IALG), and 444–466 (IIAM…TLYF).

It belongs to the TrkH potassium transport family.

The protein resides in the cell membrane. This is an uncharacterized protein from Methanocaldococcus jannaschii (strain ATCC 43067 / DSM 2661 / JAL-1 / JCM 10045 / NBRC 100440) (Methanococcus jannaschii).